The chain runs to 164 residues: MIKTAKISTLRLAITRNARNLSFTTLVRSPEVDNSKIKTLEDLTRLETLEGVDPELIKRLINEKTQEFNTQDELKLLKSMQMEQDRLNEVPLKRFTRPLWIFILMASTFYLGAHLVWWKLAYEKKEVELKHKVDSLETTLKDVMKEKATGPTPCNNKKSWYKFW.

The transit peptide at 1–28 (MIKTAKISTLRLAITRNARNLSFTTLVR) directs the protein to the mitochondrion. Topologically, residues 29 to 97 (SPEVDNSKIK…NEVPLKRFTR (69 aa)) are mitochondrial matrix. The chain crosses the membrane as a helical span at residues 98-118 (PLWIFILMASTFYLGAHLVWW). Residues 119–164 (KLAYEKKEVELKHKVDSLETTLKDVMKEKATGPTPCNNKKSWYKFW) lie on the Mitochondrial intermembrane side of the membrane. Positions 121–149 (AYEKKEVELKHKVDSLETTLKDVMKEKAT) form a coiled coil.

This sequence belongs to the INA17 family. Component of the inner membrane assembly (INA) complex, composed of INA17 and INA22. Interacts with a subset of F(1)F(0)-ATP synthase subunits of the F(1)-domain and the peripheral stalk.

Its subcellular location is the mitochondrion inner membrane. In terms of biological role, component of the INA complex (INAC) that promotes the biogenesis of mitochondrial F(1)F(0)-ATP synthase. INAC facilitates the assembly of the peripheral stalk and promotes the assembly of the catalytic F(1)-domain with the membrane-embedded F(0)-domain. In Candida glabrata (strain ATCC 2001 / BCRC 20586 / JCM 3761 / NBRC 0622 / NRRL Y-65 / CBS 138) (Yeast), this protein is Inner membrane assembly complex subunit 17.